A 159-amino-acid chain; its full sequence is Vasotocin-neurophysin VT (159 aa).

The first 17 residues, 1–17 (TAPVPACFLCLLALSSA), serve as a signal peptide directing secretion. A disulfide bond links C18 and C23. The residue at position 26 (G26) is a Glycine amide. Disulfide bonds link C39–C83, C42–C56, C50–C73, C57–C63, C90–C102, C96–C114, and C103–C108. N129 is a glycosylation site (N-linked (GlcNAc...) asparagine).

The protein belongs to the vasopressin/oxytocin family. In terms of processing, seven disulfide bonds are present in neurophysin.

The protein localises to the secreted. Its function is as follows. Vasotocin is an antidiuretic hormone. This is Vasotocin-neurophysin VT from Bufo japonicus (Japanese common toad).